We begin with the raw amino-acid sequence, 144 residues long: Small ribosomal subunit protein eS10A (144 aa).

Residues 90–144 form a disordered region; the sequence is THKRQVRPTAPRAGRPEPRERASADAGYRRAEKKDEGAAPSGFAPSFRGGFGRPQ. Over residues 103–126 the composition is skewed to basic and acidic residues; sequence GRPEPRERASADAGYRRAEKKDEG.

This sequence belongs to the eukaryotic ribosomal protein eS10 family. As to quaternary structure, component of the small ribosomal subunit (SSU). Mature yeast ribosomes consist of a small (40S) and a large (60S) subunit. The 40S small subunit contains 1 molecule of ribosomal RNA (18S rRNA) and at least 33 different proteins. The large 60S subunit contains 3 rRNA molecules (25S, 5.8S and 5S rRNA) and at least 46 different proteins. eS10 interacts with GCN1 (via middle region); this interaction is direct and promotes GCN2 kinase activity.

The protein localises to the cytoplasm. Functionally, component of the ribosome, a large ribonucleoprotein complex responsible for the synthesis of proteins in the cell. The small ribosomal subunit (SSU) binds messenger RNAs (mRNAs) and translates the encoded message by selecting cognate aminoacyl-transfer RNA (tRNA) molecules. The large subunit (LSU) contains the ribosomal catalytic site termed the peptidyl transferase center (PTC), which catalyzes the formation of peptide bonds, thereby polymerizing the amino acids delivered by tRNAs into a polypeptide chain. The nascent polypeptides leave the ribosome through a tunnel in the LSU and interact with protein factors that function in enzymatic processing, targeting, and the membrane insertion of nascent chains at the exit of the ribosomal tunnel. eS10 plays a role as a positive regulator of the GCN2 kinase activity by stimulating GCN1-mediated GCN2 activation. In Schizosaccharomyces pombe (strain 972 / ATCC 24843) (Fission yeast), this protein is Small ribosomal subunit protein eS10A (rps1001).